The sequence spans 146 residues: Mite group 2 allergen Der p 2 (146 aa).

Residues 1–17 (MMYKILCLSLLVAAVAR) form the signal peptide. 3 disulfides stabilise this stretch: C25–C136, C38–C44, and C90–C95.

This sequence belongs to the NPC2 family.

It localises to the secreted. The protein is Mite group 2 allergen Der p 2 (DERP2) of Dermatophagoides pteronyssinus (European house dust mite).